A 326-amino-acid polypeptide reads, in one-letter code: Beta-ketoacyl-[acyl-carrier-protein] synthase III (326 aa).

Residues C116 and H253 contribute to the active site. Residues 254 to 258 (QANIR) are ACP-binding. N283 is an active-site residue.

The protein belongs to the thiolase-like superfamily. FabH family. Homodimer.

The protein localises to the cytoplasm. The enzyme catalyses malonyl-[ACP] + acetyl-CoA + H(+) = 3-oxobutanoyl-[ACP] + CO2 + CoA. The protein operates within lipid metabolism; fatty acid biosynthesis. Its function is as follows. Catalyzes the condensation reaction of fatty acid synthesis by the addition to an acyl acceptor of two carbons from malonyl-ACP. Catalyzes the first condensation reaction which initiates fatty acid synthesis and may therefore play a role in governing the total rate of fatty acid production. Possesses both acetoacetyl-ACP synthase and acetyl transacylase activities. Its substrate specificity determines the biosynthesis of branched-chain and/or straight-chain of fatty acids. The chain is Beta-ketoacyl-[acyl-carrier-protein] synthase III from Jannaschia sp. (strain CCS1).